A 120-amino-acid polypeptide reads, in one-letter code: Glycophorin-A (120 aa).

The residue at position 1 (Gln-1) is a Pyrrolidone carboxylic acid. Residues 1–40 (QTIATGSPPIAGTSDLSTITSAATPTFTTEQDGREQGDGL) form a disordered region. Thr-2 and Thr-5 each carry an O-linked (GalNAc...) threonine glycan. Ser-7 carries an O-linked (GalNAc...) serine glycan. O-linked (GalNAc...) threonine glycosylation occurs at Thr-13. O-linked (GalNAc...) serine glycosylation occurs at Ser-17. The span at 17 to 29 (STITSAATPTFTT) shows a compositional bias: low complexity. Residues Thr-18 and Thr-20 are each glycosylated (O-linked (GalNAc...) threonine). O-linked (GalNAc...) serine glycosylation occurs at Ser-21. O-linked (GalNAc...) threonine glycans are attached at residues Thr-24 and Thr-28. A helical transmembrane segment spans residues 50-72 (VITVIILGVMAGIIGIILLLAYV). The tract at residues 78 to 120 (KRPPADVPPPASTVPSADAPPPVSEDDETSLTSVETDYPGDSQ) is disordered. Residues 82 to 100 (ADVPPPASTVPSADAPPPV) are compositionally biased toward pro residues. The segment covering 107–120 (SLTSVETDYPGDSQ) has biased composition (polar residues). At Ser-119 the chain carries Phosphoserine.

This sequence belongs to the glycophorin-A family. Homodimer.

It is found in the membrane. In terms of biological role, glycophorin A is the major intrinsic membrane sialoglycoprotein of the erythrocyte. Appears to be important for the function of SLC4A1 and is required for high activity of SLC4A1. May be involved in translocation of SLC4A1 to the plasma membrane. The chain is Glycophorin-A from Equus caballus (Horse).